A 466-amino-acid polypeptide reads, in one-letter code: ATP synthase subunit beta (466 aa).

ATP is bound at residue 152 to 159 (GGAGVGKT).

It belongs to the ATPase alpha/beta chains family. As to quaternary structure, F-type ATPases have 2 components, CF(1) - the catalytic core - and CF(0) - the membrane proton channel. CF(1) has five subunits: alpha(3), beta(3), gamma(1), delta(1), epsilon(1). CF(0) has three main subunits: a(1), b(2) and c(9-12). The alpha and beta chains form an alternating ring which encloses part of the gamma chain. CF(1) is attached to CF(0) by a central stalk formed by the gamma and epsilon chains, while a peripheral stalk is formed by the delta and b chains.

It is found in the cell inner membrane. The catalysed reaction is ATP + H2O + 4 H(+)(in) = ADP + phosphate + 5 H(+)(out). Functionally, produces ATP from ADP in the presence of a proton gradient across the membrane. The catalytic sites are hosted primarily by the beta subunits. This is ATP synthase subunit beta from Helicobacter acinonychis (strain Sheeba).